The sequence spans 31 residues: Cytochrome b6-f complex subunit 6 (31 aa).

A helical transmembrane segment spans residues Ile4 to Gly24.

This sequence belongs to the PetL family. As to quaternary structure, the 4 large subunits of the cytochrome b6-f complex are cytochrome b6, subunit IV (17 kDa polypeptide, PetD), cytochrome f and the Rieske protein, while the 4 small subunits are PetG, PetL, PetM and PetN. The complex functions as a dimer.

It is found in the plastid. The protein localises to the chloroplast thylakoid membrane. Functionally, component of the cytochrome b6-f complex, which mediates electron transfer between photosystem II (PSII) and photosystem I (PSI), cyclic electron flow around PSI, and state transitions. PetL is important for photoautotrophic growth as well as for electron transfer efficiency and stability of the cytochrome b6-f complex. This Panax ginseng (Korean ginseng) protein is Cytochrome b6-f complex subunit 6.